Here is a 345-residue protein sequence, read N- to C-terminus: PI-PLC X domain-containing protein 1 (345 aa).

One can recognise a PI-PLC X-box domain in the interval 52 to 228; it reads QLWDVPLHHL…QVIVSYEDEA (177 aa).

Expressed at highest levels in brain and kidney. Also detected in stomach, thymus and skeletal muscle.

Its subcellular location is the cytoplasm. The sequence is that of PI-PLC X domain-containing protein 1 (Plcxd1) from Mus musculus (Mouse).